The sequence spans 169 residues: Peptide deformylase (169 aa).

Fe cation-binding residues include Cys91 and His133. Glu134 is an active-site residue. His137 serves as a coordination point for Fe cation.

Belongs to the polypeptide deformylase family. It depends on Fe(2+) as a cofactor.

It carries out the reaction N-terminal N-formyl-L-methionyl-[peptide] + H2O = N-terminal L-methionyl-[peptide] + formate. Its function is as follows. Removes the formyl group from the N-terminal Met of newly synthesized proteins. Requires at least a dipeptide for an efficient rate of reaction. N-terminal L-methionine is a prerequisite for activity but the enzyme has broad specificity at other positions. This chain is Peptide deformylase, found in Aliivibrio salmonicida (strain LFI1238) (Vibrio salmonicida (strain LFI1238)).